Reading from the N-terminus, the 119-residue chain is uncharacterized protein (119 aa).

An N-terminal signal peptide occupies residues 1-26 (MNKLKRLSMLTVMIASVFIFSSHALA). Positions 30–104 (YTVSTSSGAP…IVPGFVSDTY (75 aa)) constitute an SH3b domain.

To B.subtilis YraJ.

This is an uncharacterized protein from Bacillus subtilis (strain 168).